Reading from the N-terminus, the 135-residue chain is MVKCMKPGKAVILLQGRYTGKKAVIVKSFDDGTVEKKYGHCLVAGLKKYPSKVIRKDSAKKTAKKSRVKCFFKVINYQHVMPTRYTLDLDLKNVVSADAISSKDKKVTALKEAKAKFEERFKTGKNRWFFTKLRF.

Belongs to the eukaryotic ribosomal protein eL27 family.

This is Large ribosomal subunit protein eL27z (RPL27A) from Arabidopsis thaliana (Mouse-ear cress).